A 393-amino-acid polypeptide reads, in one-letter code: Formate-dependent phosphoribosylglycinamide formyltransferase (393 aa).

N(1)-(5-phospho-beta-D-ribosyl)glycinamide is bound by residues 15–16 (EL) and Glu-75. Residues Arg-107, Lys-148, 153–158 (SSGKGQ), 188–191 (EEYI), and Glu-196 contribute to the ATP site. Residues 112-302 (NLAAEKLAIK…EFELHLRAIL (191 aa)) enclose the ATP-grasp domain. Glu-261 and Glu-273 together coordinate Mg(2+). Residues Asp-280, Lys-350, and 357–358 (RR) each bind N(1)-(5-phospho-beta-D-ribosyl)glycinamide.

This sequence belongs to the PurK/PurT family. Homodimer.

The catalysed reaction is N(1)-(5-phospho-beta-D-ribosyl)glycinamide + formate + ATP = N(2)-formyl-N(1)-(5-phospho-beta-D-ribosyl)glycinamide + ADP + phosphate + H(+). The protein operates within purine metabolism; IMP biosynthesis via de novo pathway; N(2)-formyl-N(1)-(5-phospho-D-ribosyl)glycinamide from N(1)-(5-phospho-D-ribosyl)glycinamide (formate route): step 1/1. Functionally, involved in the de novo purine biosynthesis. Catalyzes the transfer of formate to 5-phospho-ribosyl-glycinamide (GAR), producing 5-phospho-ribosyl-N-formylglycinamide (FGAR). Formate is provided by PurU via hydrolysis of 10-formyl-tetrahydrofolate. The protein is Formate-dependent phosphoribosylglycinamide formyltransferase of Prochlorococcus marinus (strain SARG / CCMP1375 / SS120).